The primary structure comprises 232 residues: MAKLGKRARAAREAFAGKENVTVEEAVALIKANSSVKFDETVEIAMNLGVDPRHADQMVRGVVGLPNGTGKTVRVAVFARGAKADEATAAGADIVGAEDLMETVQSGKIEFDRCIATPDMMPIVGRLGKVLGPRNLMPNPKVGTVTMDVEAAVKAAKGGEVQFKAEKGGVVHAGVGKLSFDEAKLVENIRAFVGAVSKAKPTGAKGAYMKKIALSSTMGPGVSVAIEDANVE.

The protein belongs to the universal ribosomal protein uL1 family. In terms of assembly, part of the 50S ribosomal subunit.

Functionally, binds directly to 23S rRNA. The L1 stalk is quite mobile in the ribosome, and is involved in E site tRNA release. Protein L1 is also a translational repressor protein, it controls the translation of the L11 operon by binding to its mRNA. The sequence is that of Large ribosomal subunit protein uL1 from Roseobacter denitrificans (strain ATCC 33942 / OCh 114) (Erythrobacter sp. (strain OCh 114)).